A 286-amino-acid polypeptide reads, in one-letter code: ATP synthase gamma chain (286 aa).

Belongs to the ATPase gamma chain family. F-type ATPases have 2 components, CF(1) - the catalytic core - and CF(0) - the membrane proton channel. CF(1) has five subunits: alpha(3), beta(3), gamma(1), delta(1), epsilon(1). CF(0) has three main subunits: a, b and c.

The protein resides in the cell membrane. Its function is as follows. Produces ATP from ADP in the presence of a proton gradient across the membrane. The gamma chain is believed to be important in regulating ATPase activity and the flow of protons through the CF(0) complex. The chain is ATP synthase gamma chain from Bacillus anthracis (strain A0248).